The chain runs to 59 residues: uncharacterized protein (59 aa).

A helical membrane pass occupies residues 7–27 (LLLLVAIALISAFALTVTGVV).

The protein localises to the membrane. This is an uncharacterized protein from Pyrobaculum aerophilum (strain ATCC 51768 / DSM 7523 / JCM 9630 / CIP 104966 / NBRC 100827 / IM2).